Reading from the N-terminus, the 69-residue chain is Cytochrome c oxidase subunit 8A, mitochondrial (69 aa).

Residues 1-25 (MSVLTSLLLRGLTGSARWLPVPRAK) constitute a mitochondrion transit peptide. The SIFI-degron signature appears at 2–19 (SVLTSLLLRGLTGSARWL). Topologically, residues 26–36 (VHSMPPEVELG) are mitochondrial matrix. Residues 37–60 (IMEKAIGLTSCFVSLFLPAGWILS) form a helical membrane-spanning segment. Residues 61 to 69 (HLEDYKRPE) are Mitochondrial intermembrane-facing.

Belongs to the cytochrome c oxidase VIII family. As to quaternary structure, component of the cytochrome c oxidase (complex IV, CIV), a multisubunit enzyme composed of 14 subunits. The complex is composed of a catalytic core of 3 subunits MT-CO1, MT-CO2 and MT-CO3, encoded in the mitochondrial DNA, and 11 supernumerary subunits COX4I, COX5A, COX5B, COX6A, COX6B, COX6C, COX7A, COX7B, COX7C, COX8 and NDUFA4, which are encoded in the nuclear genome. The complex exists as a monomer or a dimer and forms supercomplexes (SCs) in the inner mitochondrial membrane with NADH-ubiquinone oxidoreductase (complex I, CI) and ubiquinol-cytochrome c oxidoreductase (cytochrome b-c1 complex, complex III, CIII), resulting in different assemblies (supercomplex SCI(1)III(2)IV(1) and megacomplex MCI(2)III(2)IV(2)). In terms of processing, in response to mitochondrial stress, the precursor protein is ubiquitinated by the SIFI complex in the cytoplasm before mitochondrial import, leading to its degradation. Within the SIFI complex, UBR4 initiates ubiquitin chain that are further elongated or branched by KCMF1.

It localises to the mitochondrion inner membrane. Its pathway is energy metabolism; oxidative phosphorylation. Its function is as follows. Component of the cytochrome c oxidase, the last enzyme in the mitochondrial electron transport chain which drives oxidative phosphorylation. The respiratory chain contains 3 multisubunit complexes succinate dehydrogenase (complex II, CII), ubiquinol-cytochrome c oxidoreductase (cytochrome b-c1 complex, complex III, CIII) and cytochrome c oxidase (complex IV, CIV), that cooperate to transfer electrons derived from NADH and succinate to molecular oxygen, creating an electrochemical gradient over the inner membrane that drives transmembrane transport and the ATP synthase. Cytochrome c oxidase is the component of the respiratory chain that catalyzes the reduction of oxygen to water. Electrons originating from reduced cytochrome c in the intermembrane space (IMS) are transferred via the dinuclear copper A center (CU(A)) of subunit 2 and heme A of subunit 1 to the active site in subunit 1, a binuclear center (BNC) formed by heme A3 and copper B (CU(B)). The BNC reduces molecular oxygen to 2 water molecules using 4 electrons from cytochrome c in the IMS and 4 protons from the mitochondrial matrix. The sequence is that of Cytochrome c oxidase subunit 8A, mitochondrial (COX8A) from Macaca silenus (Lion-tailed macaque).